A 506-amino-acid chain; its full sequence is Ubiquitin carboxyl-terminal hydrolase 22 (506 aa).

The segment at 4-121 (AGCSHVNGFK…KEEQRKAWKL (118 aa)) adopts a UBP-type zinc-finger fold. 12 residues coordinate Zn(2+): Cys6, His8, Cys46, Cys49, Cys59, Cys62, Cys67, His72, His76, His82, Cys95, and Cys98. The USP domain maps to 159-501 (RGLINLGNTC…EGYLLFYHKQ (343 aa)). The active-site Nucleophile is Cys168. His460 (proton acceptor) is an active-site residue.

This sequence belongs to the peptidase C19 family. UBP8 subfamily. As to quaternary structure, component of some SAGA transcription coactivator-HAT complexes.

The protein localises to the nucleus. The catalysed reaction is Thiol-dependent hydrolysis of ester, thioester, amide, peptide and isopeptide bonds formed by the C-terminal Gly of ubiquitin (a 76-residue protein attached to proteins as an intracellular targeting signal).. In terms of biological role, histone deubiquitinating component of the transcription regulatory histone acetylation (HAT) complex SAGA. Catalyzes the deubiquitination of both histones H2A and H2B, thereby acting as a coactivator. Recruited to specific gene promoters by activators, where it is required for transcription. The protein is Ubiquitin carboxyl-terminal hydrolase 22 (usp22) of Danio rerio (Zebrafish).